The primary structure comprises 292 residues: MPQTSDGNVHAPQYREAKPSQGDPSLSVSQLFRLDNRTIIITGATGFLGSTLAIAILESGADVVCLDLPPTPTAENWNDVKTTASRHEQQLSYYQLDVTDEDAVADTFAKFLPTLRYPVRGLVTCAGLSLNGPSSEFPASAFRKVLDINVTGTFLVAKATARAMISANTTGSMVFVASMSGYGANKGVDTAGYNSSKAAVHQLTRSLAAEWGSRVGLPLIRVNSLSPGYIRTAATAEALQKPGMEDQWTGDNMLYRLSRVDEFRAPVLFMLGDGSSFMTGADLRVDGGHCSW.

The interval Met-1–Ser-25 is disordered. The NADP(+) site is built by Leu-48, Asp-97, Lys-158, Tyr-193, Lys-197, Ile-230, and Thr-232. Tyr-193 serves as the catalytic Proton donor. Lys-197 functions as the Lowers pKa of active site Tyr in the catalytic mechanism.

Belongs to the short-chain dehydrogenases/reductases (SDR) family.

Functionally, short chain dehydrogenases/reductase; part of the gene cluster that mediates the biosynthesis of notoamide, a fungal indole alkaloid that belongs to a family of natural products containing a characteristic bicyclo[2.2.2]diazaoctane core. The first step of notoamide biosynthesis involves coupling of L-proline and L-tryptophan by the bimodular NRPS notE', to produce cyclo-L-tryptophan-L-proline called brevianamide F. The reverse prenyltransferase notF' then acts as a deoxybrevianamide E synthase and converts brevianamide F to deoxybrevianamide E via reverse prenylation at C-2 of the indole ring leading to the bicyclo[2.2.2]diazaoctane core. Deoxybrevianamide E is further hydroxylated at C-6 of the indole ring, likely catalyzed by the cytochrome P450 monooxygenase notG', to yield 6-hydroxy-deoxybrevianamide E. 6-hydroxy-deoxybrevianamide E is a specific substrate of the prenyltransferase notC' for normal prenylation at C-7 to produce 6-hydroxy-7-prenyl-deoxybrevianamide, also called notoamide S. As the proposed pivotal branching point in notoamide biosynthesis, notoamide S can be diverted to notoamide E through an oxidative pyran ring closure putatively catalyzed by either notH' cytochrome P450 monooxygenase or the notD' FAD-linked oxidoreductase. This step would be followed by an indole 2,3-epoxidation-initiated pinacol-like rearrangement catalyzed by the notB' FAD-dependent monooxygenase leading to the formation of notoamide C and notoamide D. On the other hand notoamide S is converted to notoamide T by notH' (or notD'), a bifunctional oxidase that also functions as the intramolecular Diels-Alderase responsible for generation of (-)-notoamide T. To generate antipodal (+)-notoaminide T, notH (or notD) in Aspergillus strain MF297-2 is expected to catalyze a Diels-Alder reaction leading to the opposite stereochemistry. The remaining oxidoreductase notD' (or notH') likely catalyzes the oxidative pyran ring formation to yield (-)-stephacidin A. The FAD-dependent monooxygenase notI' is highly similar to notB' and is predicted to catalyze a similar conversion from (-)-stephacidin A to (+)-notoamide B via the 2,3-epoxidation of (-)-stephacidin A followed by a pinacol-type rearrangement. Finally, it remains unclear which enzyme could be responsible for the final hydroxylation steps leading to notoamide A and sclerotiamide. The function of notP' in the notoamide biosynthesis has not been determined yet. The polypeptide is Short chain dehydrogenases/reductase notP' (Aspergillus versicolor).